We begin with the raw amino-acid sequence, 577 residues long: Hemagglutinin-neuraminidase (577 aa).

Topologically, residues 1-26 (MDRAVSQVALENDEREAKNTWRLIFR) are intravirion. The helical transmembrane segment at 27 to 47 (IAILFLTVVTLAISVASLLYS) threads the bilayer. Topologically, residues 48-577 (MGASTPSDLV…DDGVREARSG (530 aa)) are virion surface. Asn119 carries N-linked (GlcNAc...) asparagine; by host glycosylation. An important for interaction with fusion/F protein region spans residues 124 to 152 (GAPIHDPDYIGGIGKELIVDDASDVTSFY). 3 disulfide bridges follow: Cys172/Cys196, Cys186/Cys247, and Cys238/Cys251. The involved in neuraminidase activity stretch occupies residues 234-239 (NRKSCS). N-linked (GlcNAc...) asparagine; by host glycosylation is found at Asn341 and Asn433. 2 disulfides stabilise this stretch: Cys344/Cys461 and Cys455/Cys465. N-linked (GlcNAc...) asparagine; by host glycosylation is found at Asn481 and Asn538. The cysteines at positions 531 and 542 are disulfide-linked.

Belongs to the paramyxoviruses hemagglutinin-neuraminidase family. In terms of assembly, homotetramer; composed of disulfide-linked homodimers. Interacts with F protein trimer. Interacts with host CG-1B; this interaction inhibits viral adsorption and replication rather than internalization.

The protein resides in the virion membrane. It localises to the host cell membrane. The catalysed reaction is Hydrolysis of alpha-(2-&gt;3)-, alpha-(2-&gt;6)-, alpha-(2-&gt;8)- glycosidic linkages of terminal sialic acid residues in oligosaccharides, glycoproteins, glycolipids, colominic acid and synthetic substrates.. In terms of biological role, mediates the viral entry into the host cell together with fusion/F protein. Attaches the virus to sialic acid-containing cell receptors and thereby initiates infection. Binding of HN protein to the receptor induces a conformational change that allows the F protein to trigger virion/cell membranes fusion. Its function is as follows. Neuraminidase activity ensures the efficient spread of the virus by dissociating the mature virions from the neuraminic acid containing glycoproteins. This Newcastle disease virus (strain Chicken/United States/LaSota/46) (NDV) protein is Hemagglutinin-neuraminidase (HN).